The following is a 75-amino-acid chain: Putative DNA-directed RNA polymerase subunit omega (75 aa).

The protein belongs to the RNA polymerase subunit omega family.

It is found in the plastid. It localises to the chloroplast. It catalyses the reaction RNA(n) + a ribonucleoside 5'-triphosphate = RNA(n+1) + diphosphate. May be involved in RNA polymerase activity. This Pyropia yezoensis (Susabi-nori) protein is Putative DNA-directed RNA polymerase subunit omega.